The sequence spans 428 residues: Elongation factor 1-alpha (428 aa).

Residues 5–225 enclose the tr-type G domain; that stretch reads KPILNVAFIG…DAFQPPEKPT (221 aa). Positions 14–21 are G1; it reads GHVDAGKS. GTP is bound at residue 14-21; it reads GHVDAGKS. Residue serine 21 participates in Mg(2+) binding. The interval 70–74 is G2; sequence GVTID. Positions 91–94 are G3; sequence DCPG. GTP contacts are provided by residues 91–95 and 149–152; these read DCPGH and NKMD. The interval 149 to 152 is G4; it reads NKMD. The segment at 189 to 191 is G5; it reads ASL.

The protein belongs to the TRAFAC class translation factor GTPase superfamily. Classic translation factor GTPase family. EF-Tu/EF-1A subfamily.

It is found in the cytoplasm. It catalyses the reaction GTP + H2O = GDP + phosphate + H(+). Functionally, GTP hydrolase that promotes the GTP-dependent binding of aminoacyl-tRNA to the A-site of ribosomes during protein biosynthesis. In Methanococcus maripaludis (strain C5 / ATCC BAA-1333), this protein is Elongation factor 1-alpha.